The following is a 214-amino-acid chain: Small ribosomal subunit protein uS3c (214 aa).

The region spanning Ile-39–Glu-111 is the KH type-2 domain.

The protein belongs to the universal ribosomal protein uS3 family. Part of the 30S ribosomal subunit.

It localises to the plastid. The protein resides in the chloroplast. This is Small ribosomal subunit protein uS3c (rps3) from Thalassiosira pseudonana (Marine diatom).